Here is a 298-residue protein sequence, read N- to C-terminus: Protease HtpX homolog (298 aa).

Transmembrane regions (helical) follow at residues 15 to 35 (LIMV…GYLF) and 39 to 59 (PWMG…IMWQ). H143 is a Zn(2+) binding site. E144 is a catalytic residue. Residue H147 coordinates Zn(2+). 2 consecutive transmembrane segments (helical) span residues 153–173 (ILLS…SGMA) and 197–217 (MIFK…SASL). E227 contributes to the Zn(2+) binding site.

This sequence belongs to the peptidase M48B family. It depends on Zn(2+) as a cofactor.

Its subcellular location is the cell membrane. The protein is Protease HtpX homolog of Lactobacillus helveticus (strain DPC 4571).